We begin with the raw amino-acid sequence, 232 residues long: Sec-independent protein translocase protein TatB (232 aa).

A helical membrane pass occupies residues 1-21 (MFDIGFGELMLLFVIGLVVLG). Disordered stretches follow at residues 108–129 (EPHTIHNPLVTDPEALHDGVTP) and 176–232 (AAST…NNDR). 2 stretches are compositionally biased toward low complexity: residues 189–203 (ADSAANLATQAATPA) and 214–232 (RAATATGPASSTSPLNNDR).

It belongs to the TatB family. In terms of assembly, the Tat system comprises two distinct complexes: a TatABC complex, containing multiple copies of TatA, TatB and TatC subunits, and a separate TatA complex, containing only TatA subunits. Substrates initially bind to the TatABC complex, which probably triggers association of the separate TatA complex to form the active translocon.

It is found in the cell inner membrane. In terms of biological role, part of the twin-arginine translocation (Tat) system that transports large folded proteins containing a characteristic twin-arginine motif in their signal peptide across membranes. Together with TatC, TatB is part of a receptor directly interacting with Tat signal peptides. TatB may form an oligomeric binding site that transiently accommodates folded Tat precursor proteins before their translocation. The sequence is that of Sec-independent protein translocase protein TatB from Sodalis glossinidius (strain morsitans).